Consider the following 231-residue polypeptide: Cytidylate kinase 1 (231 aa).

7 to 15 (GPSGAGKGT) provides a ligand contact to ATP.

This sequence belongs to the cytidylate kinase family. Type 1 subfamily.

It localises to the cytoplasm. It carries out the reaction CMP + ATP = CDP + ADP. The catalysed reaction is dCMP + ATP = dCDP + ADP. The chain is Cytidylate kinase 1 from Haemophilus influenzae (strain ATCC 51907 / DSM 11121 / KW20 / Rd).